Here is a 260-residue protein sequence, read N- to C-terminus: Snake venom serine protease serpentokallikrein-1 (260 aa).

A signal peptide spans 1 to 18; it reads MVLIRVLANLLILQLSYA. A propeptide spanning residues 19–24 is cleaved from the precursor; sequence QRTSEL. The region spanning 25–251 is the Peptidase S1 domain; that stretch reads VIGGDECNIN…HLDWIKSIIA (227 aa). 6 disulfides stabilise this stretch: Cys31–Cys165, Cys52–Cys68, Cys102–Cys258, Cys144–Cys212, Cys176–Cys191, and Cys202–Cys227. The Charge relay system role is filled by His67. N-linked (GlcNAc...) asparagine glycans are attached at residues Asn81 and Asn105. Catalysis depends on Asp112, which acts as the Charge relay system. N-linked (GlcNAc...) asparagine glycans are attached at residues Asn156 and Asn172. Ser206 (charge relay system) is an active-site residue.

This sequence belongs to the peptidase S1 family. Snake venom subfamily. As to quaternary structure, monomer. As to expression, expressed by the venom gland.

Its subcellular location is the secreted. Its function is as follows. Snake venom serine protease that may act in the hemostasis system of the prey. The chain is Snake venom serine protease serpentokallikrein-1 from Protobothrops mucrosquamatus (Taiwan habu).